Here is a 292-residue protein sequence, read N- to C-terminus: MASSSVSSLQFLFVTSQTPSSLKPNSTLSFFSLPSSSLNLSLSSSSIGHSASIKPFESSFSTRVALSDFDQLEDDVEVAEQPRFSEDLKLFVGNLPFSVDSAALAGLFERAGNVEIVEVIYDKLSGRSRGFGFVTMSTKEEVEAAEQQFNGYEIDGRAIRVNAGPAPAKRENSSFGGGRGGNSSYGGGRDGNSSFGGARGGRSVDSSNRVYVGNLSWGVDDLALKELFSEQGNVVDAKVVYDRDSGRSRGFGFVTYSSAKEVNDAIDSLNGIDLDGRSIRVSAAEERPRRQF.

The RRM 1 domain maps to 88–166 (LKLFVGNLPF…RAIRVNAGPA (79 aa)). A disordered region spans residues 165–203 (PAPAKRENSSFGGGRGGNSSYGGGRDGNSSFGGARGGRS). The interval 167–207 (PAKRENSSFGGGRGGNSSYGGGRDGNSSFGGARGGRSVDSS) is linker (Gly-rich). Residues 175 to 190 (FGGGRGGNSSYGGGRD) are compositionally biased toward gly residues. An RRM 2 domain is found at 208–286 (NRVYVGNLSW…RSIRVSAAEE (79 aa)).

As to expression, expressed at high levels in the leaves and seedlings, and lower levels are seen in the stems and roots.

The protein resides in the plastid. It is found in the chloroplast. This chain is 31 kDa ribonucleoprotein, chloroplastic, found in Nicotiana plumbaginifolia (Leadwort-leaved tobacco).